A 266-amino-acid chain; its full sequence is Glucosamine-6-phosphate deaminase 1 (266 aa).

Catalysis depends on Asp67, which acts as the Proton acceptor; for enolization step. Catalysis depends on Asn136, which acts as the For ring-opening step. The active-site Proton acceptor; for ring-opening step is the His138. Catalysis depends on Glu143, which acts as the For ring-opening step.

This sequence belongs to the glucosamine/galactosamine-6-phosphate isomerase family. Homohexamer.

The protein localises to the cytoplasm. It catalyses the reaction alpha-D-glucosamine 6-phosphate + H2O = beta-D-fructose 6-phosphate + NH4(+). In terms of biological role, catalyzes the reversible conversion of alpha-D-glucosamine 6-phosphate (GlcN-6P) into beta-D-fructose 6-phosphate (Fru-6P) and ammonium ion, a regulatory reaction step in de novo uridine diphosphate-N-acetyl-alpha-D-glucosamine (UDP-GlcNAc) biosynthesis via hexosamine pathway. This chain is Glucosamine-6-phosphate deaminase 1 (GPI1), found in Giardia intestinalis (Giardia lamblia).